The primary structure comprises 162 residues: Phosphopantetheine adenylyltransferase (162 aa).

Ser9 lines the substrate pocket. ATP-binding positions include 9 to 10 (SF) and His17. Substrate-binding residues include Lys41, Val77, and Lys91. ATP is bound by residues 92–94 (GLR), Glu102, and 126–132 (YAFLSSS).

It belongs to the bacterial CoaD family. Homohexamer. Requires Mg(2+) as cofactor.

Its subcellular location is the cytoplasm. It carries out the reaction (R)-4'-phosphopantetheine + ATP + H(+) = 3'-dephospho-CoA + diphosphate. It participates in cofactor biosynthesis; coenzyme A biosynthesis; CoA from (R)-pantothenate: step 4/5. Functionally, reversibly transfers an adenylyl group from ATP to 4'-phosphopantetheine, yielding dephospho-CoA (dPCoA) and pyrophosphate. The sequence is that of Phosphopantetheine adenylyltransferase from Frankia alni (strain DSM 45986 / CECT 9034 / ACN14a).